The chain runs to 596 residues: MGSVSSLISGHSFHSKHCRASQYKLRKSSHLKKLNRYSDGLLRFGFSQDSGHGKSSSKMGKSEDFFYIKVSQKARGSHHPDYTALSSGDLGGQAGVDFDPSTPPKLMPFSNQLEMGSEKGAVRPTAFKPVLPRSGAILHSSPESASHQLHPAPPDKPKEQELKPGLCSGALSDSGRNSMSSLPTHSTSSSYQLDPLVTPVGPTSRFGGSAHNITQGIVLQDSNMMSLKALSFSDGGSKLGHSNKADKGPSCVRSPISTDECSIQELEQKLLEREGALQKLQRSFEEKELASSLAYEERPRRCRDELEGPEPKGGNKLKQASQKSQRAQQVLHLQVLQLQQEKRQLRQELESLMKEQDLLETKLRSYEREKTSFGPALEETQWEVCQKSGEISLLKQQLKESQTEVNAKASEILGLKAQLKDTRGKLEGLELRTQDLEGALRTKGLELEVCENELQRKKNEAELLREKVNLLEQELQELRAQAALARDMGPPTFPEDVPALQRELERLRAELREERQGHDQMSSGFQHERLVWKEEKEKVIQYQKQLQQSYVAMYQRNQRLEKALQQLARGDSAGEPLEVDLEGADIPYEDIIATEI.

A lipid anchor (N-myristoyl glycine) is attached at G2. 2 disordered regions span residues 136-193 and 295-324; these read AILH…SYQL and YEERPRRCRDELEGPEPKGGNKLKQASQKS. Positions 153–162 are enriched in basic and acidic residues; sequence PPDKPKEQEL. Residues 178–190 are compositionally biased toward low complexity; that stretch reads SMSSLPTHSTSSS. Residues 256 to 374 are a coiled coil; it reads ISTDECSIQE…SYEREKTSFG (119 aa). Residues 295–310 are compositionally biased toward basic and acidic residues; the sequence is YEERPRRCRDELEGPE.

The protein belongs to the LZTS family. As to quaternary structure, binds EEF1G, TLK2 and CDK1. In terms of processing, phosphorylated on serine residues. Hyperphosphorylated by the cAMP-dependent kinase PKA during cell-cycle progression. Highly expressed in testis, prostate, spleen, thymus, ovary and brain. Detected at lower levels in heart, placenta, small intestine, colon, liver, kidney, skeletal muscle and pancreas. Not detectable in primary tumors from breast and prostate and in many cancer cell lines.

Its subcellular location is the cytoplasm. The protein resides in the cell membrane. It is found in the cell projection. It localises to the dendritic spine. The protein localises to the postsynaptic density. Its subcellular location is the synapse. Involved in the regulation of cell growth. May stabilize the active CDC2-cyclin B1 complex and thereby contribute to the regulation of the cell cycle and the prevention of uncontrolled cell proliferation. May act as a tumor suppressor. The protein is Leucine zipper putative tumor suppressor 1 (LZTS1) of Homo sapiens (Human).